Consider the following 614-residue polypeptide: MSGKAQQQSRIKELITRGREQGYLTYAEVNDHLPEDISDPEQVEDIIRMINDMGINVFESAPDADALLLAEADTDEAAAEEAAAALAAVETDIRRTTDPVRMYMREMGTVELLTREGEIEIAKRIEEGIREVMGAIAHFPGTVDYILGEYDRVNRGCRLSDVLSGYIDPDDNIAAPTEEVPIPGTKAAAAKEEADDDEEESEGGDDEEEPKAALTRSSQPSVSVRYPSSFSDHQGPEEKRSYPQGKRRALQALADLFMPIKLVPKQFEVLVERVRDALNRLRQQERAIMQLCVRDARMPRADFLRMFPSNETDQTWSGDLAKRNTKWAAALGEKDAAIVACQQKLIDLETETGLTVAEIKEINRRMSIGEAKARRAKKEMVEANLRLVISIAKKYTNRGLQFLDLIQEGNIGLMKAVDKFEYRRGYKFSTYATWWIRQAITRSIADQARTIRIPVHMIETINKLNRISRQMLQEMGREPTPEELGERMEMPEDKIRKVLKIAKEPISMETPIGDDEDSHLGDFIEDSTMQSPIYVATVESLKEATRDVLSGLTAREAKVLRMRFGIDMNTDHTLEEVGKQFDVTRERIRQIEAKAWRKLRHPTRSEHLRSFLDE.

The interval Asp-168–Gly-245 is disordered. The span at Glu-193–Glu-209 shows a compositional bias: acidic residues. Positions Thr-215–Asp-232 are enriched in polar residues. The segment at Met-380 to Thr-450 is sigma-70 factor domain-2. The short motif at Asp-404–Gln-407 is the Interaction with polymerase core subunit RpoC element. The interval Glu-459–Val-535 is sigma-70 factor domain-3. The tract at residues Val-548–His-601 is sigma-70 factor domain-4. The segment at residues Leu-574–Ala-593 is a DNA-binding region (H-T-H motif).

This sequence belongs to the sigma-70 factor family. RpoD/SigA subfamily. In terms of assembly, interacts transiently with the RNA polymerase catalytic core.

The protein resides in the cytoplasm. Sigma factors are initiation factors that promote the attachment of RNA polymerase to specific initiation sites and are then released. This sigma factor is the primary sigma factor during exponential growth. The protein is RNA polymerase sigma factor RpoD of Pseudomonas putida (Arthrobacter siderocapsulatus).